The sequence spans 206 residues: MSNESIKAEQDLIQEGVESEVSTAEASLIDELTQANFRIEELEQLLAEALAKVEEQKDSVIRAAAEVDNIRRRAAMDVEKANKFALEKFANELLPVLDNMERALMGTNPEDEATKSIYQGVELTQKSLLTAVAKFGVKQIDPQGQSFNPDQHQAIGMQPSAEFPANTVMLVMQKGYELNSRLLRPAMVMVSQGGPNQESATIDIEA.

This sequence belongs to the GrpE family. In terms of assembly, homodimer.

Its subcellular location is the cytoplasm. Participates actively in the response to hyperosmotic and heat shock by preventing the aggregation of stress-denatured proteins, in association with DnaK and GrpE. It is the nucleotide exchange factor for DnaK and may function as a thermosensor. Unfolded proteins bind initially to DnaJ; upon interaction with the DnaJ-bound protein, DnaK hydrolyzes its bound ATP, resulting in the formation of a stable complex. GrpE releases ADP from DnaK; ATP binding to DnaK triggers the release of the substrate protein, thus completing the reaction cycle. Several rounds of ATP-dependent interactions between DnaJ, DnaK and GrpE are required for fully efficient folding. The polypeptide is Protein GrpE (Shewanella baltica (strain OS223)).